Consider the following 165-residue polypeptide: Crossover junction endodeoxyribonuclease RuvC (165 aa).

Residues D8, E67, and D139 contribute to the active site. D8, E67, and D139 together coordinate Mg(2+).

The protein belongs to the RuvC family. As to quaternary structure, homodimer which binds Holliday junction (HJ) DNA. The HJ becomes 2-fold symmetrical on binding to RuvC with unstacked arms; it has a different conformation from HJ DNA in complex with RuvA. In the full resolvosome a probable DNA-RuvA(4)-RuvB(12)-RuvC(2) complex forms which resolves the HJ. The cofactor is Mg(2+).

Its subcellular location is the cytoplasm. It catalyses the reaction Endonucleolytic cleavage at a junction such as a reciprocal single-stranded crossover between two homologous DNA duplexes (Holliday junction).. In terms of biological role, the RuvA-RuvB-RuvC complex processes Holliday junction (HJ) DNA during genetic recombination and DNA repair. Endonuclease that resolves HJ intermediates. Cleaves cruciform DNA by making single-stranded nicks across the HJ at symmetrical positions within the homologous arms, yielding a 5'-phosphate and a 3'-hydroxyl group; requires a central core of homology in the junction. The consensus cleavage sequence is 5'-(A/T)TT(C/G)-3'. Cleavage occurs on the 3'-side of the TT dinucleotide at the point of strand exchange. HJ branch migration catalyzed by RuvA-RuvB allows RuvC to scan DNA until it finds its consensus sequence, where it cleaves and resolves the cruciform DNA. The chain is Crossover junction endodeoxyribonuclease RuvC from Alkalilimnicola ehrlichii (strain ATCC BAA-1101 / DSM 17681 / MLHE-1).